The chain runs to 1001 residues: UPF0182 protein Mjls_1469 (1001 aa).

A run of 7 helical transmembrane segments spans residues 16 to 36 (VLIGVALAAVVLLLIGPRFID), 61 to 81 (VVVFLVVSLLIGAIVFAGLAL), 112 to 132 (LFGFGVPAFIGILSGIVAQSY), 174 to 194 (FVATFLAFIANLLGHYLFGGI), 209 to 229 (IQLVTLVGILILLKAFAYWLD), 258 to 278 (KLILLAIAVICAVAVFSAIVL), and 286 to 306 (IGVVLLLLSSLVVGAGWPLVV). Low complexity predominate over residues 900–929 (ATGPAPANLPDGQPAAQPPNGQQPAAQTPG). A disordered region spans residues 900–977 (ATGPAPANLP…MSGLQDAQRS (78 aa)).

The protein belongs to the UPF0182 family.

It is found in the cell membrane. The protein is UPF0182 protein Mjls_1469 of Mycobacterium sp. (strain JLS).